The chain runs to 771 residues: GPI mannosyltransferase 3 (771 aa).

Residues 1 to 47 (MSSSRRRKSFTSSSSSSSPSFHSPPPTSRLRPRSPPSSNTKTSPTST) are disordered. Composition is skewed to low complexity over residues 10 to 21 (FTSSSSSSSPSF) and 36 to 47 (PSSNTKTSPTST). 7 helical membrane-spanning segments follow: residues 49-69 (PLAT…AFTV), 251-271 (LSLA…WMGL), 285-305 (AILV…SCVV), 341-361 (YVSQ…LVGL), 378-398 (SLVQ…LSLV), 410-430 (LPSL…PAVI), and 441-461 (LTLI…TIYH). The tract at residues 575–594 (SYLSAQPRPQHPSTTSTNDA) is disordered.

This sequence belongs to the glycosyltransferase 22 family. PIGB subfamily.

It localises to the endoplasmic reticulum membrane. It participates in glycolipid biosynthesis; glycosylphosphatidylinositol-anchor biosynthesis. Functionally, mannosyltransferase involved in glycosylphosphatidylinositol-anchor biosynthesis. Transfers the third mannose to Man2-GlcN-acyl-PI during GPI precursor assembly. The chain is GPI mannosyltransferase 3 (gpi10) from Aspergillus fumigatus (strain ATCC MYA-4609 / CBS 101355 / FGSC A1100 / Af293) (Neosartorya fumigata).